Reading from the N-terminus, the 178-residue chain is Large ribosomal subunit protein uL6 (178 aa).

The protein belongs to the universal ribosomal protein uL6 family. As to quaternary structure, part of the 50S ribosomal subunit. Interacts weakly with protein L13.

In terms of biological role, this protein binds to the 23S rRNA, and is important in its secondary structure. It is located near the subunit interface in the base of the L7/L12 stalk, and near the tRNA binding site of the peptidyltransferase center. The polypeptide is Large ribosomal subunit protein uL6 (Haloarcula marismortui (strain ATCC 43049 / DSM 3752 / JCM 8966 / VKM B-1809) (Halobacterium marismortui)).